Consider the following 90-residue polypeptide: Large ribosomal subunit protein eL31 (90 aa).

This sequence belongs to the eukaryotic ribosomal protein eL31 family.

This is Large ribosomal subunit protein eL31 from Thermococcus gammatolerans (strain DSM 15229 / JCM 11827 / EJ3).